Here is a 224-residue protein sequence, read N- to C-terminus: Protein HLJ1 (224 aa).

The 70-residue stretch at 18 to 87 (DKHEFYEILK…RSIYDRIGRD (70 aa)) folds into the J domain. Positions 84-93 (IGRDPDDRQM) are enriched in basic and acidic residues. Residues 84–107 (IGRDPDDRQMPSRGAASGFRGSAG) form a disordered region. Phosphoserine is present on serine 109. Positions 173–192 (NRGGSPFMRQQPRSRQQQQQ) are disordered. A compositionally biased stretch (low complexity) spans 181–192 (RQQPRSRQQQQQ).

The protein is Protein HLJ1 (HLJ1) of Saccharomyces cerevisiae (strain ATCC 204508 / S288c) (Baker's yeast).